The chain runs to 326 residues: Acetyl-coenzyme A carboxylase carboxyl transferase subunit beta (326 aa).

The CoA carboxyltransferase N-terminal domain maps to Leu25–Leu308. Residues Arg298–Asp326 are disordered. Residues Lys317 to Asp326 show a composition bias toward basic and acidic residues.

The protein belongs to the AccD/PCCB family. In terms of assembly, acetyl-CoA carboxylase is a heterohexamer composed of biotin carboxyl carrier protein (AccB), biotin carboxylase (AccC) and two subunits each of ACCase subunit alpha (AccA) and ACCase subunit beta (AccD).

Its subcellular location is the cytoplasm. It catalyses the reaction N(6)-carboxybiotinyl-L-lysyl-[protein] + acetyl-CoA = N(6)-biotinyl-L-lysyl-[protein] + malonyl-CoA. It functions in the pathway lipid metabolism; malonyl-CoA biosynthesis; malonyl-CoA from acetyl-CoA: step 1/1. Component of the acetyl coenzyme A carboxylase (ACC) complex. Biotin carboxylase (BC) catalyzes the carboxylation of biotin on its carrier protein (BCCP) and then the CO(2) group is transferred by the transcarboxylase to acetyl-CoA to form malonyl-CoA. This chain is Acetyl-coenzyme A carboxylase carboxyl transferase subunit beta, found in Hyphomonas neptunium (strain ATCC 15444).